The primary structure comprises 266 residues: uncharacterized protein (266 aa).

Residues 112 to 261 (LEKKIFISHS…KKWERIKAKF (150 aa)) enclose the TIR domain. The active site involves glutamate 192.

The catalysed reaction is NAD(+) + H2O = ADP-D-ribose + nicotinamide + H(+). This is an uncharacterized protein from Bacillus subtilis (strain 168).